The chain runs to 214 residues: ER lumen protein-retaining receptor 3 (214 aa).

At 1 to 4 (MNIF) the chain is on the lumenal side. A helical transmembrane segment spans residues 5-24 (RILGDVSHLLAIIILLLKMW). The Cytoplasmic portion of the chain corresponds to 25 to 32 (KSKSCAGI). A helical membrane pass occupies residues 33–52 (SGKSQLLFALVFTTRYLDLF). Residues 47–48 (RY) are interaction with the K-D-E-L motif on target proteins. The Lumenal segment spans residues 53–58 (TVFISP). Residues 59–79 (YNTVMKIIFLACAYVTVYLIY) form a helical membrane-spanning segment. The Cytoplasmic portion of the chain corresponds to 80–92 (GKLRKSYDSENDT). Residues 93-110 (FRLEFLLVPVIGLSFLEN) traverse the membrane as a helical segment. The Lumenal segment spans residues 111-116 (YEFTPL). A helical transmembrane segment spans residues 117–135 (EILWTFSIYLESVAILPQL). Residues 136 to 149 (FMISKTGEAESITT) lie on the Cytoplasmic side of the membrane. Residues 150–168 (HYLFFLGLYRVLYLANWIW) traverse the membrane as a helical segment. The interval 159–169 (RVLYLANWIWR) is interaction with the K-D-E-L motif on target proteins. Over 169–178 (RYHTEKFYDQ) the chain is Lumenal. The helical transmembrane segment at 179-199 (IAVVSGVVQTIFYFDFFYLYV) threads the bilayer. Topologically, residues 200–214 (TKVLKGKKLSLPMPV) are cytoplasmic. Positions 204 to 207 (KGKK) are important for recycling of cargo proteins with the sequence motif K-D-E-L from the Golgi to the endoplasmic reticulum.

It belongs to the ERD2 family.

The protein resides in the endoplasmic reticulum membrane. Its subcellular location is the golgi apparatus membrane. The protein localises to the cytoplasmic vesicle. It localises to the COPI-coated vesicle membrane. In terms of biological role, receptor for the C-terminal sequence motif K-D-E-L that is present on endoplasmic reticulum resident proteins and that mediates their recycling from the Golgi back to the endoplasmic reticulum. The chain is ER lumen protein-retaining receptor 3 (kdelr3) from Xenopus laevis (African clawed frog).